The following is a 343-amino-acid chain: L-ornithine/L-arginine 3-hydroxylase (343 aa).

2 residues coordinate Fe cation: His-147 and Glu-149. Polar residues predominate over residues 199-215 (MPDNSHLPQNTAESTGD). The interval 199-218 (MPDNSHLPQNTAESTGDPTK) is disordered. Residue His-302 coordinates Fe cation. Arg-316 serves as a coordination point for 2-oxoglutarate.

This sequence belongs to the clavaminate synthase family. Fe(2+) serves as cofactor.

The enzyme catalyses L-ornithine + 2-oxoglutarate + O2 = (3S)-3-hydroxy-L-ornithine + succinate + CO2. It carries out the reaction L-arginine + 2-oxoglutarate + O2 = (2S,3S)-hydroxyarginine + succinate + CO2. Alpha-ketoglutarate-dependent dioxygenase that in vitro catalyzes the regio- and stereoselective hydroxylation of L-ornithine and L-arginine, leading to (3S)-3-hydroxy-L-ornithine and (3S)-3-hydroxy-L-arginine, respectively. Cannot use L-lysine, D-ornithine, or D-arginine as substrate. This chain is L-ornithine/L-arginine 3-hydroxylase, found in Catenulispora acidiphila (strain DSM 44928 / JCM 14897 / NBRC 102108 / NRRL B-24433 / ID139908).